The sequence spans 397 residues: Acetate kinase (397 aa).

Mg(2+) is bound at residue Asn8. Lys15 is a binding site for ATP. Arg92 contacts substrate. The Proton donor/acceptor role is filled by Asp149. ATP-binding positions include 209–213 (HLGNG), 283–285 (DFR), and 331–335 (GVGEN). Position 385 (Glu385) interacts with Mg(2+).

This sequence belongs to the acetokinase family. Homodimer. Mg(2+) serves as cofactor. Requires Mn(2+) as cofactor.

The protein localises to the cytoplasm. The enzyme catalyses acetate + ATP = acetyl phosphate + ADP. It functions in the pathway metabolic intermediate biosynthesis; acetyl-CoA biosynthesis; acetyl-CoA from acetate: step 1/2. Its function is as follows. Catalyzes the formation of acetyl phosphate from acetate and ATP. Can also catalyze the reverse reaction. The polypeptide is Acetate kinase (Corynebacterium glutamicum (strain ATCC 13032 / DSM 20300 / JCM 1318 / BCRC 11384 / CCUG 27702 / LMG 3730 / NBRC 12168 / NCIMB 10025 / NRRL B-2784 / 534)).